The chain runs to 746 residues: MVNSKASSFRFSFFIHNSAFIILFPPSFSRLLFIPAIGYLQDHLQSLSTSRLMSEERLVSGNIIDYPAPVYSYRRRVTREVPFGTIFLGGYLPIRVESMITAHTMDTAASVEQCRRLYEAGCEIIRLTVPTEKDAENLKNIREQLRRDGIDTPLVADIHFSAKAAMKAVEFVENIRINPGNYATGAKFSSKDYTDDEYRAELDKVREEFTPLVRKARSLGVSMRIGTNHGSLSDRIVSRYGNSPEGMVEAALEFSRICEDEGYYDQLFSMKSSNVRVMIQAYRLLVARADAELRYAYPLHLGVTEAGDGDEGRIKSAMGIGALLEDGLGDTIRVSLTEDPVNEVPVGFAIVKKYNDMLLVRGDRAHLPVKHVIEHERKSAGHVQLPFEPFSYSRRPSISIDGAGIPVGGDALPGVETAAHAPITDTESLRDEILARLDPGKPEDAIRSELVSVGVGSAEDISLLKALLDSLGNLREKIVVSTADTSIVPALLPLCGRVRLDIVEGETLGTGLIESLHDRNAAIEFCFIHEKSSENVPAEVLVRLAAKLKARGLQRVMLSIVSDAPLYSTRKLALELKKAGLDYPIAVRYRRLDGERSGVLIQSAIQAGTLFCDGIGDLIALETNMPASEEVSLCFNILQAARIRMSKTEFISCPGCGRTYFELEKTTALIKQRVSHLKGLKIGIMGCIVNGPGEMADADFGYVGSGKGRVSLYVGKECVEENIPEAEALERLIELIRQNGKWVDPV.

Residues Cys653, Cys656, Cys687, and Glu694 each coordinate [4Fe-4S] cluster.

Belongs to the IspG family. [4Fe-4S] cluster serves as cofactor.

It catalyses the reaction (2E)-4-hydroxy-3-methylbut-2-enyl diphosphate + oxidized [flavodoxin] + H2O + 2 H(+) = 2-C-methyl-D-erythritol 2,4-cyclic diphosphate + reduced [flavodoxin]. It participates in isoprenoid biosynthesis; isopentenyl diphosphate biosynthesis via DXP pathway; isopentenyl diphosphate from 1-deoxy-D-xylulose 5-phosphate: step 5/6. Converts 2C-methyl-D-erythritol 2,4-cyclodiphosphate (ME-2,4cPP) into 1-hydroxy-2-methyl-2-(E)-butenyl 4-diphosphate. The protein is 4-hydroxy-3-methylbut-2-en-1-yl diphosphate synthase (flavodoxin) of Chlorobaculum tepidum (strain ATCC 49652 / DSM 12025 / NBRC 103806 / TLS) (Chlorobium tepidum).